The following is a 386-amino-acid chain: Indole-3-acetate O-methyltransferase 1 (386 aa).

Y30 contributes to the S-adenosyl-L-methionine binding site. Substrate contacts are provided by residues Y30 and 33-37 (NSQAQ). Residues G72, 72–73 (GC), N78, 108–111 (FSDL), D110, 152–154 (SFY), and 169–171 (AFS) each bind S-adenosyl-L-methionine. Position 170–174 (170–174 (FSLHW)) interacts with substrate. Mg(2+)-binding residues include N191, V195, R277, D278, F280, and N281. S334 provides a ligand contact to substrate.

The protein belongs to the methyltransferase superfamily. SABATH family. As to quaternary structure, homodimer. The cofactor is Mg(2+). Expressed in seedling roots and leaves. Expressed in the stigma, funiculus, and vascular bundles in sepals, petals and stamens.

The catalysed reaction is (indol-3-yl)acetate + S-adenosyl-L-methionine = methyl (indol-3-yl)acetate + S-adenosyl-L-homocysteine. Functionally, catalyzes the methylation of the free carboxyl end of the plant hormone indole-3-acetic acid (IAA). Converts IAA to IAA methyl ester (MeIAA). Regulates IAA activities by IAA methylation. Methylation of IAA plays an important role in regulating plant development and auxin homeostasis. Required for correct leaf pattern formation. MeIAA seems to be an inactive form of IAA. This is Indole-3-acetate O-methyltransferase 1 (IAMT1) from Arabidopsis thaliana (Mouse-ear cress).